The primary structure comprises 316 residues: Methionyl-tRNA formyltransferase (316 aa).

S112–P115 contacts (6S)-5,6,7,8-tetrahydrofolate.

Belongs to the Fmt family.

It catalyses the reaction L-methionyl-tRNA(fMet) + (6R)-10-formyltetrahydrofolate = N-formyl-L-methionyl-tRNA(fMet) + (6S)-5,6,7,8-tetrahydrofolate + H(+). Functionally, attaches a formyl group to the free amino group of methionyl-tRNA(fMet). The formyl group appears to play a dual role in the initiator identity of N-formylmethionyl-tRNA by promoting its recognition by IF2 and preventing the misappropriation of this tRNA by the elongation apparatus. The protein is Methionyl-tRNA formyltransferase of Actinobacillus pleuropneumoniae serotype 7 (strain AP76).